A 254-amino-acid chain; its full sequence is MLLAIDVGNTNTTLGVYEGAVLRKHWRVETSHTRTYDEYGILLRQLFASAGLEPARVSSVVIASVVPPLAFTLEQMCVRYFDRKPMFVGPGMKTGMPILYENPREVGADRVVNAVAAFERWRCALVVVDFGTATTFDVISAKGEYLGGAICPGIGISMDALARSASKLPRVEFAKPPSVVGKNTVASIQAGLVYGYVGMVDGICAQIAAELATPPKVVATGGLAPLIAGVSRSITEVDEHLTLEGLRILHERNR.

An ATP-binding site is contributed by 6–13 (DVGNTNTT). Residues tyrosine 100 and 107–110 (GADR) contribute to the substrate site. Aspartate 109 (proton acceptor) is an active-site residue. Aspartate 129 serves as a coordination point for K(+). Threonine 132 contributes to the ATP binding site. Substrate is bound at residue threonine 184.

This sequence belongs to the type III pantothenate kinase family. In terms of assembly, homodimer. Requires NH4(+) as cofactor. The cofactor is K(+).

Its subcellular location is the cytoplasm. It catalyses the reaction (R)-pantothenate + ATP = (R)-4'-phosphopantothenate + ADP + H(+). It participates in cofactor biosynthesis; coenzyme A biosynthesis; CoA from (R)-pantothenate: step 1/5. Catalyzes the phosphorylation of pantothenate (Pan), the first step in CoA biosynthesis. The polypeptide is Type III pantothenate kinase (Anaeromyxobacter dehalogenans (strain 2CP-C)).